The following is an 85-amino-acid chain: Small ribosomal subunit protein bS18 (85 aa).

It belongs to the bacterial ribosomal protein bS18 family. In terms of assembly, part of the 30S ribosomal subunit. Forms a tight heterodimer with protein bS6.

Its function is as follows. Binds as a heterodimer with protein bS6 to the central domain of the 16S rRNA, where it helps stabilize the platform of the 30S subunit. This chain is Small ribosomal subunit protein bS18, found in Helicobacter acinonychis (strain Sheeba).